The following is a 122-amino-acid chain: Large ribosomal subunit protein uL14 (122 aa).

Belongs to the universal ribosomal protein uL14 family. As to quaternary structure, part of the 50S ribosomal subunit. Forms a cluster with proteins L3 and L19. In the 70S ribosome, L14 and L19 interact and together make contacts with the 16S rRNA in bridges B5 and B8.

Its function is as follows. Binds to 23S rRNA. Forms part of two intersubunit bridges in the 70S ribosome. The polypeptide is Large ribosomal subunit protein uL14 (Caldanaerobacter subterraneus subsp. tengcongensis (strain DSM 15242 / JCM 11007 / NBRC 100824 / MB4) (Thermoanaerobacter tengcongensis)).